Here is a 291-residue protein sequence, read N- to C-terminus: tRNA-uridine aminocarboxypropyltransferase 1 (291 aa).

The disordered stretch occupies residues 158–181 (KNSAYEPSSKRPKFSPENDKNTYE). Basic and acidic residues predominate over residues 171 to 181 (FSPENDKNTYE). The DXTW signature appears at 199 to 202 (DSTW).

It belongs to the TDD superfamily. DTWD1 family.

It is found in the nucleus. It catalyses the reaction a uridine in tRNA + S-adenosyl-L-methionine = a 3-[(3S)-3-amino-3-carboxypropyl]uridine in tRNA + S-methyl-5'-thioadenosine + H(+). Functionally, catalyzes the formation of 3-(3-amino-3-carboxypropyl)uridine (acp3U) at position 20 in the D-loop of several cytoplasmic tRNAs (acp3U(20)). This is tRNA-uridine aminocarboxypropyltransferase 1 from Xenopus laevis (African clawed frog).